A 389-amino-acid polypeptide reads, in one-letter code: Phospholipid phosphatase-related protein type 2 (389 aa).

2 helical membrane-spanning segments follow: residues 14 to 34 (IIPC…AFFP) and 66 to 86 (FLGV…AGQV). N-linked (GlcNAc...) asparagine glycosylation occurs at asparagine 102. 3 consecutive transmembrane segments (helical) span residues 147-167 (AALC…VFRV), 176-196 (SLCL…VAEY), and 203-223 (VLAG…CVVH). 2 positions are modified to phosphoserine: serine 236 and serine 249. Disordered stretches follow at residues 255-280 (SVAQ…PQNC) and 295-351 (APAM…GRKL). The span at 265-278 (SHSTPARLTPSKPQ) shows a compositional bias: polar residues. Positions 314–339 (TPLPLPLPLPAPAPSQGPSPSSPGPG) are enriched in pro residues.

It belongs to the PA-phosphatase related phosphoesterase family.

It is found in the membrane. This chain is Phospholipid phosphatase-related protein type 2, found in Bos taurus (Bovine).